The sequence spans 456 residues: RuvB-like 1 (456 aa).

ATP is bound at residue 70–77 (GPPGTGKT).

The protein belongs to the RuvB family. In terms of assembly, forms homohexameric rings. Can form a dodecamer with ruvbl2 made of two stacked hexameric rings. Is a component of the RNA polymerase II holoenzyme complex. Component of the chromatin-remodeling Ino80 complex. Component of some MLL1/MLL complex.

It localises to the nucleus. The protein localises to the dynein axonemal particle. It catalyses the reaction ATP + H2O = ADP + phosphate + H(+). In terms of biological role, has single-stranded DNA-stimulated ATPase and ATP-dependent DNA helicase (3' to 5') activity suggesting a role in nuclear processes such as recombination and transcription. Proposed core component of the chromatin remodeling INO80 complex which exhibits DNA- and nucleosome-activated ATPase activity and catalyzes ATP-dependent nucleosome sliding. The protein is RuvB-like 1 (ruvbl1) of Xenopus laevis (African clawed frog).